The sequence spans 212 residues: 3,4-dihydroxy-2-butanone 4-phosphate synthase (212 aa).

D-ribulose 5-phosphate is bound by residues 37–38, Asp42, 150–154, and Glu174; these read RE and RRGHT. Glu38 contacts Mg(2+). His153 lines the Mg(2+) pocket.

It belongs to the DHBP synthase family. As to quaternary structure, homodimer. Requires Mg(2+) as cofactor. It depends on Mn(2+) as a cofactor.

It carries out the reaction D-ribulose 5-phosphate = (2S)-2-hydroxy-3-oxobutyl phosphate + formate + H(+). Its pathway is cofactor biosynthesis; riboflavin biosynthesis; 2-hydroxy-3-oxobutyl phosphate from D-ribulose 5-phosphate: step 1/1. Catalyzes the conversion of D-ribulose 5-phosphate to formate and 3,4-dihydroxy-2-butanone 4-phosphate. This chain is 3,4-dihydroxy-2-butanone 4-phosphate synthase, found in Histophilus somni (strain 129Pt) (Haemophilus somnus).